Here is a 99-residue protein sequence, read N- to C-terminus: MNPANYLILSGLLFTIGATGVLVRRNAIVVFMSIELMLNAVNLTLVTFSRIHGTLEGQIMAFFVMVVAAAEVVVGLAIILAIFRTRRSASVDDVNLLKY.

Helical transmembrane passes span 3-23, 28-48, and 62-82; these read PANYLILSGLLFTIGATGVLV, IVVFMSIELMLNAVNLTLVTF, and FFVMVVAAAEVVVGLAIILAI.

Belongs to the complex I subunit 4L family. As to quaternary structure, NDH-1 is composed of 14 different subunits. Subunits NuoA, H, J, K, L, M, N constitute the membrane sector of the complex.

It is found in the cell membrane. The catalysed reaction is a quinone + NADH + 5 H(+)(in) = a quinol + NAD(+) + 4 H(+)(out). NDH-1 shuttles electrons from NADH, via FMN and iron-sulfur (Fe-S) centers, to quinones in the respiratory chain. The immediate electron acceptor for the enzyme in this species is believed to be a menaquinone. Couples the redox reaction to proton translocation (for every two electrons transferred, four hydrogen ions are translocated across the cytoplasmic membrane), and thus conserves the redox energy in a proton gradient. In Parafrankia sp. (strain EAN1pec), this protein is NADH-quinone oxidoreductase subunit K.